The following is a 159-amino-acid chain: Small ribosomal subunit protein uS4 (159 aa).

The S4 RNA-binding domain occupies 106 to 158 (RRLQTLVFRMGLAKSIHHARQLVVHGHVLVAGRRVTSPGFLVPRELEDKITIE).

The protein belongs to the universal ribosomal protein uS4 family. Part of the 30S ribosomal subunit. Contacts protein S5. The interaction surface between S4 and S5 is involved in control of translational fidelity.

Functionally, one of the primary rRNA binding proteins, it binds directly to 16S rRNA where it nucleates assembly of the body of the 30S subunit. With S5 and S12 plays an important role in translational accuracy. The chain is Small ribosomal subunit protein uS4 from Pyrobaculum calidifontis (strain DSM 21063 / JCM 11548 / VA1).